The chain runs to 408 residues: Probable pectate lyase 5 (408 aa).

The first 27 residues, 1 to 27 (MRMTLVHLSLSLFSCLLLVLSPTFIAS), serve as a signal peptide directing secretion. An N-linked (GlcNAc...) asparagine glycan is attached at N45. Residues D206, D230, and D234 each coordinate Ca(2+). The active site involves R286.

This sequence belongs to the polysaccharide lyase 1 family. The cofactor is Ca(2+).

The catalysed reaction is Eliminative cleavage of (1-&gt;4)-alpha-D-galacturonan to give oligosaccharides with 4-deoxy-alpha-D-galact-4-enuronosyl groups at their non-reducing ends.. It functions in the pathway glycan metabolism; pectin degradation; 2-dehydro-3-deoxy-D-gluconate from pectin: step 2/5. This chain is Probable pectate lyase 5, found in Arabidopsis thaliana (Mouse-ear cress).